The following is a 325-amino-acid chain: Lactonase drp35 (325 aa).

Ca(2+)-binding residues include glutamate 46, threonine 108, glycine 110, aspartate 128, threonine 131, tyrosine 133, aspartate 136, asparagine 183, aspartate 234, and serine 235. Aspartate 234 (proton donor) is an active-site residue.

This sequence belongs to the SMP-30/CGR1 family. It depends on Ca(2+) as a cofactor.

Its subcellular location is the cytoplasm. In terms of biological role, exhibits lactonase activity. Acts in cells with perturbed membrane integrity and is possibly related to the membrane homeostasis. This Staphylococcus epidermidis (strain ATCC 35984 / DSM 28319 / BCRC 17069 / CCUG 31568 / BM 3577 / RP62A) protein is Lactonase drp35 (drp35).